The primary structure comprises 314 residues: A-kinase anchor protein 7 isoform gamma (314 aa).

Residues 1–46 (MPFAAVDIQDDCGSPDVPQANPKRSKEEEEDRGDKNDHVKKRKKAK) form a disordered region. A compositionally biased stretch (basic and acidic residues) spans 24–37 (RSKEEEEDRGDKND). AMP is bound by residues threonine 95 and 185–187 (HLT). CMP-binding positions include threonine 95 and 185-187 (HLT). The tract at residues 260 to 314 (AELVRLSKRLVENAVLKAVQQYLEETQNKKQPGEGNSTKAEEGDRNGDGSDNNRK) is PKA-RII-alpha subunit binding domain. The segment at 261–285 (ELVRLSKRLVENAVLKAVQQYLEET) is RI-alpha-binding. An RII-binding region spans residues 262–275 (LVRLSKRLVENAVL). The segment at 281 to 314 (YLEETQNKKQPGEGNSTKAEEGDRNGDGSDNNRK) is disordered. The span at 298 to 314 (KAEEGDRNGDGSDNNRK) shows a compositional bias: basic and acidic residues.

Binds cAMP-dependent protein kinase (PKA). Interacts with PRKCA; only the cytoplasmic form is capable of interacting with PRKCA. In terms of tissue distribution, expressed in oocytes.

The protein localises to the nucleus. It localises to the cytoplasm. Probably targets cAMP-dependent protein kinase (PKA) to the cellular membrane or cytoskeletal structures. The membrane-associated form reduces epithelial sodium channel (ENaC) activity, whereas the free cytoplasmic form may negatively regulate ENaC channel feedback inhibition by intracellular sodium. This chain is A-kinase anchor protein 7 isoform gamma, found in Mus musculus (Mouse).